The chain runs to 450 residues: NADH-ubiquinone oxidoreductase chain 2 (450 aa).

Helical transmembrane passes span 25–45 (GTITIMFTTMLFFLSMDIVAM), 58–78 (LTPYNLPLSFLMLSLIVMLLM), 90–110 (SPFYLLLLLTNMMGLLLFPLV), 113–133 (LIALYVVMELQSYSLYLLTGL), 145–165 (LLYFLMGGVASTIMLLASYFV), 186–206 (AFDYFDILLVALLFKMGMAPL), 219–239 (TYITAYISMVAKMSMVSWIFA), 248–268 (VTILFFYISLAMAAYKPLFQV), 272–292 (TMLAYSGMLNFSYILLSMMSY), 295–315 (AFYIYMIQYVLTHLILFLGML), 344–364 (LAFSLILALFSLIGMPPTPGF), 385–405 (AIVVCSVVATYYYANMIKVLF), and 414–436 (NFINPSLAFTMASATSLLFSFFM).

Belongs to the complex I subunit 2 family.

It is found in the mitochondrion inner membrane. The enzyme catalyses a ubiquinone + NADH + 5 H(+)(in) = a ubiquinol + NAD(+) + 4 H(+)(out). Core subunit of the mitochondrial membrane respiratory chain NADH dehydrogenase (Complex I) that is believed to belong to the minimal assembly required for catalysis. Complex I functions in the transfer of electrons from NADH to the respiratory chain. The immediate electron acceptor for the enzyme is believed to be ubiquinone. The polypeptide is NADH-ubiquinone oxidoreductase chain 2 (ND2) (Debaryomyces hansenii (strain ATCC 36239 / CBS 767 / BCRC 21394 / JCM 1990 / NBRC 0083 / IGC 2968) (Yeast)).